Here is a 750-residue protein sequence, read N- to C-terminus: Coiled-coil domain-containing protein 142 (750 aa).

The interval Met1–Glu29 is disordered. The stretch at Ala87–Asp110 forms a coiled coil. Residues Leu687–Pro714 form a disordered region. Polar residues predominate over residues Pro693 to Leu707.

The protein is Coiled-coil domain-containing protein 142 (CCDC142) of Homo sapiens (Human).